Here is a 340-residue protein sequence, read N- to C-terminus: Centromere protein N (340 aa).

Ser227 and Ser236 each carry phosphoserine.

This sequence belongs to the CENP-N/CHL4 family. Component of the CENPA-NAC complex, at least composed of CENPA, CENPC, CENPH, CENPM, CENPN, CENPT and CENPU. The CENPA-NAC complex interacts with the CENPA-CAD complex, composed of CENPI, CENPK, CENPL, CENPO, CENPP, CENPQ, CENPR and CENPS. Interacts directly with CENPA. Identified in a centromere complex containing histones H2A, H2B and H4, and at least CENPA, CENPB, CENPC, CENPT, CENPN, HJURP, SUPT16H, SSRP1 and RSF1.

The protein resides in the nucleus. Its subcellular location is the chromosome. It is found in the centromere. It localises to the kinetochore. In terms of biological role, component of the CENPA-NAC (nucleosome-associated) complex, a complex that plays a central role in assembly of kinetochore proteins, mitotic progression and chromosome segregation. The CENPA-NAC complex recruits the CENPA-CAD (nucleosome distal) complex and may be involved in incorporation of newly synthesized CENPA into centromeres. CENPN is the first protein to bind specifically to CENPA nucleosomes and the direct binding of CENPA nucleosomes by CENPN is required for centromere assembly. Required for chromosome congression and efficiently align the chromosomes on a metaphase plate. This chain is Centromere protein N (Cenpn), found in Rattus norvegicus (Rat).